Reading from the N-terminus, the 445-residue chain is Tubulin beta-2 chain (445 aa).

Residues glutamine 12, glutamate 73, serine 142, glycine 146, threonine 147, glycine 148, asparagine 208, and asparagine 230 each contribute to the GTP site. Glutamate 73 contacts Mg(2+).

This sequence belongs to the tubulin family. As to quaternary structure, dimer of alpha and beta chains. A typical microtubule is a hollow water-filled tube with an outer diameter of 25 nm and an inner diameter of 15 nM. Alpha-beta heterodimers associate head-to-tail to form protofilaments running lengthwise along the microtubule wall with the beta-tubulin subunit facing the microtubule plus end conferring a structural polarity. Microtubules usually have 13 protofilaments but different protofilament numbers can be found in some organisms and specialized cells. The cofactor is Mg(2+).

It is found in the cytoplasm. The protein resides in the cytoskeleton. Tubulin is the major constituent of microtubules, a cylinder consisting of laterally associated linear protofilaments composed of alpha- and beta-tubulin heterodimers. Microtubules grow by the addition of GTP-tubulin dimers to the microtubule end, where a stabilizing cap forms. Below the cap, tubulin dimers are in GDP-bound state, owing to GTPase activity of alpha-tubulin. This is Tubulin beta-2 chain (TUBB2) from Suillus bovinus (Jersey cow bolete).